The following is a 54-amino-acid chain: uncharacterized protein (54 aa).

The interval 34 to 54 is disordered; sequence NNREKQKSGKLRELRRGFKTF.

This is an uncharacterized protein from Acidianus two-tailed virus (ATV).